The sequence spans 698 residues: Methionine--tRNA ligase (698 aa).

Positions 18-28 (PYANGDLHVGH) match the 'HIGH' region motif. 4 residues coordinate Zn(2+): cysteine 149, cysteine 152, cysteine 161, and cysteine 165. Threonine 350 is an ATP binding site. The disordered stretch occupies residues 567–590 (EAADAGDEEGEDEDEEPPAADLEP). Over residues 570 to 584 (DAGDEEGEDEDEEPP) the composition is skewed to acidic residues. Positions 600 to 698 (DFQDLDIRVA…EDAEPGTKVQ (99 aa)) constitute a tRNA-binding domain.

It belongs to the class-I aminoacyl-tRNA synthetase family. MetG type 1 subfamily. Homodimer. It depends on Zn(2+) as a cofactor.

Its subcellular location is the cytoplasm. The catalysed reaction is tRNA(Met) + L-methionine + ATP = L-methionyl-tRNA(Met) + AMP + diphosphate. Is required not only for elongation of protein synthesis but also for the initiation of all mRNA translation through initiator tRNA(fMet) aminoacylation. The polypeptide is Methionine--tRNA ligase (Natronomonas pharaonis (strain ATCC 35678 / DSM 2160 / CIP 103997 / JCM 8858 / NBRC 14720 / NCIMB 2260 / Gabara) (Halobacterium pharaonis)).